A 227-amino-acid polypeptide reads, in one-letter code: PKHD-type hydroxylase Bcen_3557 (227 aa).

The region spanning 78 to 178 (KVFPPLFNRY…RVASFFWIQS (101 aa)) is the Fe2OG dioxygenase domain. Residues H96, D98, and H159 each coordinate Fe cation. 2-oxoglutarate is bound at residue R169.

It depends on Fe(2+) as a cofactor. Requires L-ascorbate as cofactor.

This Burkholderia orbicola (strain AU 1054) protein is PKHD-type hydroxylase Bcen_3557.